The sequence spans 164 residues: Transcription elongation factor GreA (164 aa).

The stretch at 50-76 (YHAAREEQGQQEARIRQLQELLNNAKV) forms a coiled coil.

The protein belongs to the GreA/GreB family.

Its function is as follows. Necessary for efficient RNA polymerase transcription elongation past template-encoded arresting sites. The arresting sites in DNA have the property of trapping a certain fraction of elongating RNA polymerases that pass through, resulting in locked ternary complexes. Cleavage of the nascent transcript by cleavage factors such as GreA or GreB allows the resumption of elongation from the new 3'terminus. GreA releases sequences of 2 to 3 nucleotides. This Mycobacteroides abscessus (strain ATCC 19977 / DSM 44196 / CCUG 20993 / CIP 104536 / JCM 13569 / NCTC 13031 / TMC 1543 / L948) (Mycobacterium abscessus) protein is Transcription elongation factor GreA.